Reading from the N-terminus, the 279-residue chain is NH(3)-dependent NAD(+) synthetase (279 aa).

An ATP-binding site is contributed by 40 to 47 (GLSGGIDS). A Mg(2+)-binding site is contributed by aspartate 46. Residue arginine 122 participates in deamido-NAD(+) binding. Threonine 142 lines the ATP pocket. Glutamate 147 is a binding site for Mg(2+). Residues lysine 155 and aspartate 162 each contribute to the deamido-NAD(+) site. The ATP site is built by lysine 171 and serine 193. 253 to 254 (HK) serves as a coordination point for deamido-NAD(+).

Belongs to the NAD synthetase family. Homodimer.

It catalyses the reaction deamido-NAD(+) + NH4(+) + ATP = AMP + diphosphate + NAD(+) + H(+). It functions in the pathway cofactor biosynthesis; NAD(+) biosynthesis; NAD(+) from deamido-NAD(+) (ammonia route): step 1/1. Functionally, catalyzes the ATP-dependent amidation of deamido-NAD to form NAD. Uses ammonia as a nitrogen source. The polypeptide is NH(3)-dependent NAD(+) synthetase (Sulfurisphaera tokodaii (strain DSM 16993 / JCM 10545 / NBRC 100140 / 7) (Sulfolobus tokodaii)).